The primary structure comprises 591 residues: MNQGKIITVSGPLVVASGMQEANIQDICRVGHLGLVGEIIEMRRDQASIQVYEETSGIGPGEPVVTTGCPLSVELGPGLISEMFDGIQRPLDRFQKATDSDFLIRGVAIPSLDRKAKWAFIPKLSVGQEVVAGDILGTVQETAVIEHRIMVPYKVSGTLVAIHAGDFTVTDTVYEIKQEDGSIYQGSLMQTWPVRQSRPVAQKLIPVEPLVTGQRVIDTFFPVTKGGAAAVPGPFGAGKTVVQHQIAKFANVDIVIYVGCGERGNEMTDVLNEFPELIDPNTGQSIMERTVLIANTSNMPVAAREASIYTGITIAEYFRDMGYSVAIMADSTSRWAEALREMSGRLQEMPGDEGYPAYLGSRIAEYYERAGRVRTLGSQEREGTITAIGAVSPPGGDISEPVTQNTLRIVKVFWGLDAPLAQRRHFPAINWLTSYSLYQDDVGSYIDRKQQSNWSNKVTRAMAILQREASLEEIVRLVGLDSLSEQDRLTMAVARQIREDYLQQNAFDSVDTFTSFPKQEAMLTNILTFNEEASKALSLGAYFNEIMEGTAQVRDRIARSKFIPEENLEQIKGFTQKVTKEIHHVLAKGGI.

233-240 (GPFGAGKT) serves as a coordination point for ATP.

Belongs to the ATPase alpha/beta chains family.

The enzyme catalyses ATP + H2O + 4 H(+)(in) = ADP + phosphate + 5 H(+)(out). In terms of biological role, produces ATP from ADP in the presence of a proton gradient across the membrane. The V-type alpha chain is a catalytic subunit. The polypeptide is V-type ATP synthase alpha chain (Streptococcus pyogenes serotype M5 (strain Manfredo)).